Reading from the N-terminus, the 162-residue chain is uncharacterized protein (162 aa).

The HTH asnC-type domain occupies 6 to 99; it reads LDDLDRAILK…YVTKTLSGFP (94 aa). The H-T-H motif DNA-binding region spans 25-44; sequence IAEISNQLKKPESTVHFRIK.

This is an uncharacterized protein from Pyrococcus horikoshii (strain ATCC 700860 / DSM 12428 / JCM 9974 / NBRC 100139 / OT-3).